Consider the following 155-residue polypeptide: Ribosome maturation factor RimP (155 aa).

It belongs to the RimP family.

It is found in the cytoplasm. Functionally, required for maturation of 30S ribosomal subunits. The polypeptide is Ribosome maturation factor RimP (Prochlorococcus marinus (strain AS9601)).